The primary structure comprises 401 residues: Chorismate synthase (401 aa).

Arg-40 and Arg-46 together coordinate NADP(+). FMN-binding positions include Arg-135 to Ser-137, Gln-256 to Ala-257, Gly-300, Lys-315 to Thr-319, and Arg-341.

The protein belongs to the chorismate synthase family. As to quaternary structure, homotetramer. FMNH2 is required as a cofactor.

It catalyses the reaction 5-O-(1-carboxyvinyl)-3-phosphoshikimate = chorismate + phosphate. It participates in metabolic intermediate biosynthesis; chorismate biosynthesis; chorismate from D-erythrose 4-phosphate and phosphoenolpyruvate: step 7/7. Catalyzes the anti-1,4-elimination of the C-3 phosphate and the C-6 proR hydrogen from 5-enolpyruvylshikimate-3-phosphate (EPSP) to yield chorismate, which is the branch point compound that serves as the starting substrate for the three terminal pathways of aromatic amino acid biosynthesis. This reaction introduces a second double bond into the aromatic ring system. The sequence is that of Chorismate synthase from Mycobacterium bovis (strain BCG / Pasteur 1173P2).